A 205-amino-acid polypeptide reads, in one-letter code: Urease accessory protein UreG (205 aa).

11-18 (GPVGSGKT) serves as a coordination point for GTP.

This sequence belongs to the SIMIBI class G3E GTPase family. UreG subfamily. In terms of assembly, homodimer. UreD, UreF and UreG form a complex that acts as a GTP-hydrolysis-dependent molecular chaperone, activating the urease apoprotein by helping to assemble the nickel containing metallocenter of UreC. The UreE protein probably delivers the nickel.

Its subcellular location is the cytoplasm. Facilitates the functional incorporation of the urease nickel metallocenter. This process requires GTP hydrolysis, probably effectuated by UreG. This is Urease accessory protein UreG from Prochlorococcus marinus (strain NATL1A).